The chain runs to 305 residues: GTPase Era (305 aa).

The Era-type G domain maps to 13–181; the sequence is RCGFVAIVGR…ESAVGRFLPE (169 aa). Residues 21–28 form a G1 region; that stretch reads GRPNVGKS. 21 to 28 is a binding site for GTP; that stretch reads GRPNVGKS. Residues 47–51 form a G2 region; sequence QTTRH. The interval 68–71 is G3; that stretch reads DTPG. GTP-binding positions include 68-72 and 130-133; these read DTPGM and NKVD. Residues 130-133 form a G4 region; that stretch reads NKVD. The G5 stretch occupies residues 160–162; sequence LSA. The 85-residue stretch at 204 to 288 folds into the KH type-2 domain; the sequence is VREKITRQLG…MLRLWVKVKR (85 aa).

Belongs to the TRAFAC class TrmE-Era-EngA-EngB-Septin-like GTPase superfamily. Era GTPase family. As to quaternary structure, monomer.

The protein resides in the cytoplasm. The protein localises to the cell inner membrane. Functionally, an essential GTPase that binds both GDP and GTP, with rapid nucleotide exchange. Plays a role in 16S rRNA processing and 30S ribosomal subunit biogenesis and possibly also in cell cycle regulation and energy metabolism. In Marinobacter nauticus (strain ATCC 700491 / DSM 11845 / VT8) (Marinobacter aquaeolei), this protein is GTPase Era.